The following is a 250-amino-acid chain: Peptidyl-tRNA hydrolase (250 aa).

Tyr14 is a tRNA binding site. The Proton acceptor role is filled by His19. Phe64, Asn66, and Asn112 together coordinate tRNA. The interval 192 to 250 (MGDGNQRPGGVKTDPAQLEKAPPKAQSHIRQARQNQKKPNIPESGPMAEMLKKLLGKKD) is disordered. Residues 219–229 (HIRQARQNQKK) show a composition bias toward polar residues. Basic and acidic residues predominate over residues 241–250 (MLKKLLGKKD).

Belongs to the PTH family. As to quaternary structure, monomer.

The protein resides in the cytoplasm. It carries out the reaction an N-acyl-L-alpha-aminoacyl-tRNA + H2O = an N-acyl-L-amino acid + a tRNA + H(+). Its function is as follows. Hydrolyzes ribosome-free peptidyl-tRNAs (with 1 or more amino acids incorporated), which drop off the ribosome during protein synthesis, or as a result of ribosome stalling. Catalyzes the release of premature peptidyl moieties from peptidyl-tRNA molecules trapped in stalled 50S ribosomal subunits, and thus maintains levels of free tRNAs and 50S ribosomes. The polypeptide is Peptidyl-tRNA hydrolase (Brucella abortus (strain 2308)).